A 294-amino-acid polypeptide reads, in one-letter code: UPF0718 protein YcgR (294 aa).

Transmembrane regions (helical) follow at residues Ile-15–Ile-35, Leu-54–Ile-74, Ala-92–Phe-112, Ser-117–Leu-137, Ile-174–Met-194, Leu-215–Ala-235, Leu-247–Ala-267, and Phe-273–Lys-293.

It belongs to the UPF0718 family.

It is found in the cell membrane. The sequence is that of UPF0718 protein YcgR (ycgR) from Bacillus subtilis (strain 168).